We begin with the raw amino-acid sequence, 335 residues long: 4-hydroxy-3-methylbut-2-enyl diphosphate reductase 2 (335 aa).

Position 37 (Cys-37) interacts with [4Fe-4S] cluster. (2E)-4-hydroxy-3-methylbut-2-enyl diphosphate-binding residues include His-66 and His-99. Residues His-66 and His-99 each contribute to the dimethylallyl diphosphate site. 2 residues coordinate isopentenyl diphosphate: His-66 and His-99. [4Fe-4S] cluster is bound at residue Cys-121. His-149 contacts (2E)-4-hydroxy-3-methylbut-2-enyl diphosphate. Residue His-149 coordinates dimethylallyl diphosphate. His-149 contributes to the isopentenyl diphosphate binding site. Residue Glu-151 is the Proton donor of the active site. Thr-189 contacts (2E)-4-hydroxy-3-methylbut-2-enyl diphosphate. [4Fe-4S] cluster is bound at residue Cys-219. The (2E)-4-hydroxy-3-methylbut-2-enyl diphosphate site is built by Ser-247, Ser-248, Asn-249, and Ser-292. Ser-247, Ser-248, Asn-249, and Ser-292 together coordinate dimethylallyl diphosphate. Isopentenyl diphosphate contacts are provided by Ser-247, Ser-248, Asn-249, and Ser-292.

It belongs to the IspH family. Requires [4Fe-4S] cluster as cofactor.

The catalysed reaction is isopentenyl diphosphate + 2 oxidized [2Fe-2S]-[ferredoxin] + H2O = (2E)-4-hydroxy-3-methylbut-2-enyl diphosphate + 2 reduced [2Fe-2S]-[ferredoxin] + 2 H(+). The enzyme catalyses dimethylallyl diphosphate + 2 oxidized [2Fe-2S]-[ferredoxin] + H2O = (2E)-4-hydroxy-3-methylbut-2-enyl diphosphate + 2 reduced [2Fe-2S]-[ferredoxin] + 2 H(+). The protein operates within isoprenoid biosynthesis; dimethylallyl diphosphate biosynthesis; dimethylallyl diphosphate from (2E)-4-hydroxy-3-methylbutenyl diphosphate: step 1/1. It functions in the pathway isoprenoid biosynthesis; isopentenyl diphosphate biosynthesis via DXP pathway; isopentenyl diphosphate from 1-deoxy-D-xylulose 5-phosphate: step 6/6. Its function is as follows. Catalyzes the conversion of 1-hydroxy-2-methyl-2-(E)-butenyl 4-diphosphate (HMBPP) into a mixture of isopentenyl diphosphate (IPP) and dimethylallyl diphosphate (DMAPP). Acts in the terminal step of the DOXP/MEP pathway for isoprenoid precursor biosynthesis. Has a higher activity compared with LytB2. Is essential for M.tuberculosis growth in vitro. The polypeptide is 4-hydroxy-3-methylbut-2-enyl diphosphate reductase 2 (Mycobacterium tuberculosis (strain ATCC 25618 / H37Rv)).